The following is an 86-amino-acid chain: Exodeoxyribonuclease 7 small subunit (86 aa).

The tract at residues 67 to 86 (RVSPASGGATEAPAPAERDR) is disordered.

Belongs to the XseB family. In terms of assembly, heterooligomer composed of large and small subunits.

It localises to the cytoplasm. The enzyme catalyses Exonucleolytic cleavage in either 5'- to 3'- or 3'- to 5'-direction to yield nucleoside 5'-phosphates.. In terms of biological role, bidirectionally degrades single-stranded DNA into large acid-insoluble oligonucleotides, which are then degraded further into small acid-soluble oligonucleotides. This chain is Exodeoxyribonuclease 7 small subunit, found in Beutenbergia cavernae (strain ATCC BAA-8 / DSM 12333 / CCUG 43141 / JCM 11478 / NBRC 16432 / NCIMB 13614 / HKI 0122).